Here is a 143-residue protein sequence, read N- to C-terminus: uncharacterized protein (143 aa).

Basic and acidic residues predominate over residues 1-14 (MPAAKKQIEEKPEV). The interval 1 to 25 (MPAAKKQIEEKPEVEQDLGAPDFSD) is disordered.

This is an uncharacterized protein from Pseudoalteromonas phage PM2 (Bacteriophage PM2).